The primary structure comprises 412 residues: Adenosine receptor A2a (412 aa).

Residues 1 to 7 (MPIMGSS) are Extracellular-facing. A helical membrane pass occupies residues 8-32 (VYITVELAIAVLAILGNVLVCWAVW). At 33–42 (LNSNLQNVTN) the chain is on the cytoplasmic side. Residues 43-66 (YFVVSLAAADIAVGVLAIPFAITI) traverse the membrane as a helical segment. The Extracellular segment spans residues 67 to 77 (STGFCAACHGC). Cystine bridges form between Cys71–Cys159, Cys74–Cys146, and Cys77–Cys166. A helical membrane pass occupies residues 78-100 (LFIACFVLVLTQSSIFSLLAIAI). Residues 101–120 (DRYIAIRIPLRYNGLVTGTR) lie on the Cytoplasmic side of the membrane. Residues 121–143 (AKGIIAICWVLSFAIGLTPMLGW) form a helical membrane-spanning segment. Residues 144–173 (NNCGQPKEGKNHSQGCGEGQVACLFEDVVP) lie on the Extracellular side of the membrane. N-linked (GlcNAc...) asparagine glycosylation is present at Asn154. Glu169 is an adenosine binding site. A helical transmembrane segment spans residues 174 to 198 (MNYMVYFNFFACVLVPLLLMLGVYL). Residues 199 to 234 (RIFLAARRQLKQMESQPLPGERARSTLQKEVHAAKS) lie on the Cytoplasmic side of the membrane. The chain crosses the membrane as a helical span at residues 235 to 258 (LAIIVGLFALCWLPLHIINCFTFF). Residue Asn253 coordinates adenosine. A disulfide bridge links Cys259 with Cys262. At 259-266 (CPDCSHAP) the chain is on the extracellular side. Residues 267–290 (LWLMYLAIVLSHTNSVVNPFIYAY) traverse the membrane as a helical segment. Adenosine contacts are provided by Ser277 and His278. Over 291–412 (RIREFRQTFR…PLAQDGAGVS (122 aa)) the chain is Cytoplasmic. Positions 391-412 (KGVCPEPPGLDDPLAQDGAGVS) are disordered.

The protein belongs to the G-protein coupled receptor 1 family. In terms of assembly, interacts (via cytoplasmic C-terminal domain) with USP4; the interaction is direct. May interact with DRD4. Interacts with NECAB2. Interacts (via cytoplasmic C-terminal domain) with GAS2L2; interaction enhances receptor-mediated adenylyl cyclase activity. Post-translationally, ubiquitinated. Deubiquitinated by USP4; leading to stabilization and expression at the cell surface.

It is found in the cell membrane. Functionally, receptor for adenosine. The activity of this receptor is mediated by G proteins which activate adenylyl cyclase. This is Adenosine receptor A2a (ADORA2A) from Homo sapiens (Human).